We begin with the raw amino-acid sequence, 213 residues long: Ephrin-A2 (213 aa).

Residues 1-24 (MAPAQRPLLPLLLLLLPLPPPPFA) form the signal peptide. In terms of domain architecture, Ephrin RBD spans 34 to 174 (SDRYAVYWNR…RLKVYVRPTN (141 aa)). Asn42 carries an N-linked (GlcNAc...) asparagine glycan. Intrachain disulfides connect Cys73-Cys114 and Cys102-Cys163. 2 N-linked (GlcNAc...) asparagine glycosylation sites follow: Asn174 and Asn188. Residue Asn188 is the site of GPI-anchor amidated asparagine attachment. Positions 189 to 213 (NSCSSPGGCRLFLSTIPVLWTLLGS) are cleaved as a propeptide — removed in mature form.

The protein belongs to the ephrin family. In terms of assembly, binds to the receptor tyrosine kinases EPHA3, EPHA4 and EPHA5. Interacts with EPHA8; activates EPHA8.

It localises to the cell membrane. Functionally, cell surface GPI-bound ligand for Eph receptors, a family of receptor tyrosine kinases which are crucial for migration, repulsion and adhesion during neuronal, vascular and epithelial development. Binds promiscuously Eph receptors residing on adjacent cells, leading to contact-dependent bidirectional signaling into neighboring cells. The signaling pathway downstream of the receptor is referred to as forward signaling while the signaling pathway downstream of the ephrin ligand is referred to as reverse signaling. With the EPHA2 receptor may play a role in bone remodeling through regulation of osteoclastogenesis and osteoblastogenesis. This Homo sapiens (Human) protein is Ephrin-A2 (EFNA2).